Here is a 673-residue protein sequence, read N- to C-terminus: FLYWCH-type zinc finger-containing protein 1 (673 aa).

The interval 1 to 62 is disordered; that stretch reads MPLPEPSEQD…SSTATLPNNT (62 aa). A Phosphoserine modification is found at Ser21. The segment covering 47-62 has biased composition (polar residues); it reads VASQETSSTATLPNNT. 2 consecutive FLYWCH-type zinc fingers follow at residues 92-150 and 235-293; these read FLKT…DHCH and FLKT…SHCH. A Glycyl lysine isopeptide (Lys-Gly) (interchain with G-Cter in SUMO2) cross-link involves residue Lys110. A compositionally biased stretch (basic and acidic residues) spans 147-158; it reads DHCHPPEKEGLD. The tract at residues 147–178 is disordered; it reads DHCHPPEKEGLDRKKRHRGRPPSSALPEGAEV. Phosphoserine occurs at positions 294 and 339. The interval 351–402 is disordered; the sequence is LSRSKSKSKSKSRSKSKSKSRSRSRKRAKKQQESSQEPPEEDQDVDPRGPEF. Residues 354–379 are compositionally biased toward basic residues; sequence SKSKSKSKSRSKSKSKSRSRSRKRAK. FLYWCH-type zinc fingers lie at residues 402-460, 490-548, and 581-639; these read FLKT…SHCH, FLKT…RHCH, and FLRT…SHCH. The segment at 646–673 is disordered; the sequence is LEALRQREKAPSAAKKKKKKKKKKKGIH. Over residues 659 to 673 the composition is skewed to basic residues; the sequence is AKKKKKKKKKKKGIH. A Glycyl lysine isopeptide (Lys-Gly) (interchain with G-Cter in SUMO2) cross-link involves residue Lys666.

In terms of assembly, interacts with CTNNB1 (when unphosphorylated), perhaps preventing interaction of CTNNB1 with TCF4, and thereby regulating transcription activation; phosphorylation of CTNNB1 may inhibit the interaction.

The protein localises to the nucleus. The protein resides in the chromosome. It is found in the centromere. In terms of biological role, transcription cofactor. Negatively regulates transcription activation by catenin beta-1 CTNNB1, perhaps acting by competing with TCF4 for CTNNB1 binding. May play a role in DNA-damage response signaling. Binds specifically to DNA sequences at peri-centromeric chromatin loci. The polypeptide is FLYWCH-type zinc finger-containing protein 1 (Flywch1) (Mus musculus (Mouse)).